A 251-amino-acid chain; its full sequence is Triosephosphate isomerase (251 aa).

A substrate-binding site is contributed by Asn-9–Lys-11. Residue His-95 is the Electrophile of the active site. Glu-167 acts as the Proton acceptor in catalysis. Substrate is bound by residues Gly-173, Ser-213, and Gly-234–Gly-235. Phosphoserine is present on Ser-213.

This sequence belongs to the triosephosphate isomerase family. As to quaternary structure, homodimer.

The protein localises to the cytoplasm. The catalysed reaction is D-glyceraldehyde 3-phosphate = dihydroxyacetone phosphate. Its pathway is carbohydrate biosynthesis; gluconeogenesis. It participates in carbohydrate degradation; glycolysis; D-glyceraldehyde 3-phosphate from glycerone phosphate: step 1/1. In terms of biological role, involved in the gluconeogenesis. Catalyzes stereospecifically the conversion of dihydroxyacetone phosphate (DHAP) to D-glyceraldehyde-3-phosphate (G3P). The chain is Triosephosphate isomerase from Bacillus cytotoxicus (strain DSM 22905 / CIP 110041 / 391-98 / NVH 391-98).